We begin with the raw amino-acid sequence, 4011 residues long: Hybrid PKS-NRPS synthetase mycA (4011 aa).

A Ketosynthase family 3 (KS3) domain is found at 12 to 451; that stretch reads NEPIAIIGSA…GANAHVILEN (440 aa). Active-site for beta-ketoacyl synthase activity residues include Cys185, His324, and His373. Residues 576-903 are acyl transferase (AT) domain; the sequence is VFTGQGAQWA…PYTGTLSRGS (328 aa). An N-terminal hotdog fold region spans residues 977–1113; it reads NPLLGRRIPD…GRVIVTLAGT (137 aa). Residues 977–1290 enclose the PKS/mFAS DH domain; the sequence is NPLLGRRIPD…ITPLATRTGQ (314 aa). The dehydratase (DH) domain stretch occupies residues 978–1287; it reads PLLGRRIPDG…GVRITPLATR (310 aa). His1009 (proton acceptor; for dehydratase activity) is an active-site residue. The segment at 1135–1290 is C-terminal hotdog fold; sequence TAEVREDEFY…ITPLATRTGQ (156 aa). Catalysis depends on Asp1195, which acts as the Proton donor; for dehydratase activity. The tract at residues 1434–1626 is methyltransferase (MT) domain; the sequence is YYVEALGIRE…FSGIDTITPE (193 aa). The tract at residues 2138–2311 is ketoreductase (KR)domain; it reads TYVLFGLTSD…AASVLHLGAV (174 aa). The 76-residue stretch at 2429 to 2504 folds into the Carrier 1 domain; the sequence is DSFLQKLQIM…DLVAFAHEKL (76 aa). Ser2464 carries the post-translational modification O-(pantetheine 4'-phosphoryl)serine. The segment at 2519-2607 is disordered; the sequence is AAAAAAAERS…PREQDVERTA (89 aa). Residues 2559–2578 are compositionally biased toward polar residues; the sequence is PASSSTGSDHPTSVTSSGHT. Residues 2604-2975 form a condensation region; sequence ERTAPMSLGQ…KPDSTLGSAP (372 aa). Positions 3009 to 3414 are adenylation; sequence IIQRNPDTIA…GELEILGRID (406 aa). The segment at 3525–3544 is disordered; sequence AKEEEEEKRPNGSSAAPLTQ. Residues 3535 to 3544 are compositionally biased toward polar residues; sequence NGSSAAPLTQ. The Carrier 2 domain occupies 3541-3621; sequence PLTQQELQLR…AMAAAVHDAA (81 aa). An O-(pantetheine 4'-phosphoryl)serine modification is found at Ser3581. The segment at 3671–3978 is reductase-like; it reads VVILTGATGF…RTVPLGQWIE (308 aa).

In the C-terminal section; belongs to the NRP synthetase family.

It carries out the reaction L-leucine + 8 malonyl-CoA + 4 S-adenosyl-L-methionine + ATP + 9 NADPH + 12 H(+) = (5S)-5-(2-methylpropyl)-3-[(2E,6R,8E,10E,12E)-6,8,10,12-tetramethyltetradeca-2,8,10,12-tetraenoyl]-2,5-dihydro-1H-pyrrol-2-one + AMP + 4 S-adenosyl-L-homocysteine + 8 CO2 + diphosphate + 9 NADP(+) + 8 CoA + 7 H2O. The protein operates within mycotoxin biosynthesis. Its function is as follows. Hybrid PKS-NRPS synthetase; part of the gene cluster that mediates the biosynthesis of myceliothermophins, mycotoxins that contain a trans-fused decalin ring system connected to a conjugated 3-pyrrolin-2-one moiety and that have potential anti-tumor properties. The polyketide synthase module (PKS) of the PKS-NRPS mycA is responsible for the synthesis of the octaketide backbone. The downstream nonribosomal peptide synthetase (NRPS) module then amidates the carboxyl end of the octaketide with a leucine. A reductase-like domain (R) at the C-terminus catalyzes the reductive release of the polyketide-amino acid intermediate. Because mycA lacks a designated enoylreductase (ER) domain, the required activity is provided the enoyl reductase mycC. Following mycA-catalyzed construction and release of aminoacyl polyketide aldehyde, Knoevenagel condensation yields the expected ketone. This C18 keto acyclic precursor is the substrate of the Diels-Alderase mycB, that catalyzes the Diels-Alder cycloaddition to produce myceliothermophin E. A yet unknown oxygenase involved in the production of myceliothermophin A, via substitution with a hydroxyl group at the C21, has still to be identified. The polypeptide is Hybrid PKS-NRPS synthetase mycA (Thermothelomyces thermophilus (strain ATCC 42464 / BCRC 31852 / DSM 1799) (Sporotrichum thermophile)).